Reading from the N-terminus, the 175-residue chain is Cuticle protein CP1876 (175 aa).

As to expression, calcified shell.

In Cancer pagurus (Rock crab), this protein is Cuticle protein CP1876.